The following is a 433-amino-acid chain: Transcription factor TCP18 (433 aa).

2 disordered regions span residues 130–163 (QRIS…GTRD) and 247–281 (DDRG…RTPI). The TCP domain maps to 148-206 (RTDRHSKIKTAKGTRDRRMRLSLDVAKELFGLQDMLGFDKASKTVEWLLTQAKPEIIKI). The region spanning 287-304 (KEERAKARERAKGRTMEK) is the R domain.

In terms of tissue distribution, expressed in unelongated axillary buds, and, to a lower extent, in axillary structures such as flowers and siliques.

It is found in the nucleus. In terms of biological role, transcription factor that prevents axillary bud outgrowth and delays early axillary bud development. Indirectly required for the auxin-induced control of apical dominance. This is Transcription factor TCP18 from Arabidopsis thaliana (Mouse-ear cress).